The primary structure comprises 923 residues: Meiotic recombination protein rec11 (923 aa).

Positions 278–365 (LFSRIHDIRA…DRFSLRIVEI (88 aa)) constitute an SCD domain.

In Schizosaccharomyces pombe (strain 972 / ATCC 24843) (Fission yeast), this protein is Meiotic recombination protein rec11 (rec11).